The primary structure comprises 341 residues: Phosphoribosylformylglycinamidine cyclo-ligase (341 aa).

It belongs to the AIR synthase family.

It is found in the cytoplasm. It catalyses the reaction 2-formamido-N(1)-(5-O-phospho-beta-D-ribosyl)acetamidine + ATP = 5-amino-1-(5-phospho-beta-D-ribosyl)imidazole + ADP + phosphate + H(+). It functions in the pathway purine metabolism; IMP biosynthesis via de novo pathway; 5-amino-1-(5-phospho-D-ribosyl)imidazole from N(2)-formyl-N(1)-(5-phospho-D-ribosyl)glycinamide: step 2/2. This is Phosphoribosylformylglycinamidine cyclo-ligase from Xanthomonas axonopodis pv. citri (strain 306).